The sequence spans 138 residues: Small ribosomal subunit protein uS8 (138 aa).

It belongs to the universal ribosomal protein uS8 family. As to quaternary structure, part of the 30S ribosomal subunit. Contacts proteins S5 and S12.

In terms of biological role, one of the primary rRNA binding proteins, it binds directly to 16S rRNA central domain where it helps coordinate assembly of the platform of the 30S subunit. The polypeptide is Small ribosomal subunit protein uS8 (Thermus aquaticus).